A 283-amino-acid chain; its full sequence is ATP phosphoribosyltransferase (283 aa).

This sequence belongs to the ATP phosphoribosyltransferase family. Long subfamily. Mg(2+) is required as a cofactor.

It is found in the cytoplasm. The catalysed reaction is 1-(5-phospho-beta-D-ribosyl)-ATP + diphosphate = 5-phospho-alpha-D-ribose 1-diphosphate + ATP. Its pathway is amino-acid biosynthesis; L-histidine biosynthesis; L-histidine from 5-phospho-alpha-D-ribose 1-diphosphate: step 1/9. Feedback inhibited by histidine. Functionally, catalyzes the condensation of ATP and 5-phosphoribose 1-diphosphate to form N'-(5'-phosphoribosyl)-ATP (PR-ATP). Has a crucial role in the pathway because the rate of histidine biosynthesis seems to be controlled primarily by regulation of HisG enzymatic activity. The sequence is that of ATP phosphoribosyltransferase from Parabacteroides distasonis (strain ATCC 8503 / DSM 20701 / CIP 104284 / JCM 5825 / NCTC 11152).